The following is a 663-amino-acid chain: Probable acetolactate synthase 2, chloroplastic (663 aa).

A compositionally biased stretch (low complexity) spans 1 to 26 (MAAAAAAASLSVSDAAAKLPKPGGQV). The disordered stretch occupies residues 1-56 (MAAAAAAASLSVSDAAAKLPKPGGQVQRRRDRDRPRVDAAACTRDSRRPTRERCST). The N-terminal 79 residues, 1-79 (MAAAAAAASL…TPVRAPVRTR (79 aa)), are a transit peptide targeting the chloroplast. Basic and acidic residues-rich tracts occupy residues 28–37 (RRRDRDRPRV) and 44–54 (RDSRRPTRERC). Thiamine diphosphate is bound at residue Glu-132. Residues Cys-152 and Cys-298 are joined by a disulfide bond. FAD-binding positions include Arg-234, 340–361 (HGTV…LGVR), and 383–402 (DIDP…ICAD). A thiamine pyrophosphate binding region spans residues 478-558 (QHQMWATQHY…VKVMVLNNQH (81 aa)). The Mg(2+) site is built by Asp-529 and Asn-556.

Belongs to the TPP enzyme family. Requires Mg(2+) as cofactor. It depends on thiamine diphosphate as a cofactor.

Its subcellular location is the plastid. It is found in the chloroplast. The catalysed reaction is 2 pyruvate + H(+) = (2S)-2-acetolactate + CO2. Its pathway is amino-acid biosynthesis; L-isoleucine biosynthesis; L-isoleucine from 2-oxobutanoate: step 1/4. It participates in amino-acid biosynthesis; L-valine biosynthesis; L-valine from pyruvate: step 1/4. The protein is Probable acetolactate synthase 2, chloroplastic (ALS2) of Oryza sativa subsp. japonica (Rice).